Here is a 553-residue protein sequence, read N- to C-terminus: Arginine--tRNA ligase (553 aa).

Positions 132 to 140 match the 'HIGH' region motif; the sequence is PTGDLHIGH.

This sequence belongs to the class-I aminoacyl-tRNA synthetase family. Monomer.

It localises to the cytoplasm. The catalysed reaction is tRNA(Arg) + L-arginine + ATP = L-arginyl-tRNA(Arg) + AMP + diphosphate. The sequence is that of Arginine--tRNA ligase from Staphylococcus aureus (strain N315).